We begin with the raw amino-acid sequence, 438 residues long: Transposon Ty2-C Gag polyprotein (438 aa).

Polar residues-rich tracts occupy residues 1–11, 19–39, and 49–60; these read MESQQLHQNPR, ASVT…SASN, and KVNSQQETTPGT. Disordered regions lie at residues 1 to 88, 365 to 397, and 419 to 438; these read MESQ…YQQH, NVSR…AKAH, and SSQY…TERI. The RNA-binding stretch occupies residues 295–397; it reads ENNINVSDRL…SSKPRAAKAH (103 aa). Positions 369–382 are enriched in low complexity; the sequence is TSPNTTNTKVTTRN.

Homotrimer.

It is found in the cytoplasm. In terms of biological role, capsid protein (CA) is the structural component of the virus-like particle (VLP), forming the shell that encapsulates the retrotransposons dimeric RNA genome. The particles are assembled from trimer-clustered units and there are holes in the capsid shells that allow for the diffusion of macromolecules. CA also has nucleocapsid-like chaperone activity, promoting primer tRNA(i)-Met annealing to the multipartite primer-binding site (PBS), dimerization of Ty2 RNA and initiation of reverse transcription. In Saccharomyces cerevisiae (strain ATCC 204508 / S288c) (Baker's yeast), this protein is Transposon Ty2-C Gag polyprotein (TY2A-C).